The primary structure comprises 192 residues: Der GTPase-activating protein YihI (192 aa).

Residues 1-12 (MSAKQPNRKPAG) are compositionally biased toward basic residues. 2 disordered regions span residues 1–87 (MSAK…IKEK) and 145–192 (DTDD…PKKK). Positions 13-26 (KRKESDASAQEGRE) are enriched in basic and acidic residues. Positions 27–36 (RKRAAKRKGL) are enriched in basic residues. Residues 145-172 (DTDDDEDEADFDEADFDEPGQPASEEEL) show a composition bias toward acidic residues. A compositionally biased stretch (basic and acidic residues) spans 183–192 (PEPKPEPKKK).

It belongs to the YihI family. As to quaternary structure, interacts with Der.

Its function is as follows. A GTPase-activating protein (GAP) that modifies Der/EngA GTPase function. May play a role in ribosome biogenesis. This is Der GTPase-activating protein YihI from Aeromonas hydrophila subsp. hydrophila (strain ATCC 7966 / DSM 30187 / BCRC 13018 / CCUG 14551 / JCM 1027 / KCTC 2358 / NCIMB 9240 / NCTC 8049).